The primary structure comprises 247 residues: MSKEPNFPPSEKLEKVEAPADLRSIAGFEWWRRTFEYKTGLGLTPEAKVQYEKDYQYVLQREQCKQCYDNRDWLLKYSPTVVFMTQQIAKLNRRRTGDDSLHFDTSKIICDVCPEWKSGGFNPSLGILLCQNRIRDKWQMEDTLSHELVHQFDELKFEVDWMNLKHHACSEVRASNLSGECRLSQEFFRRGFNGSFGRGHQECVRRRAVLSVMGNPKCKDKAEAEQIVDEVWQSCFNDTRPFEEIYR.

Position 146 (H146) interacts with a divalent metal cation. E147 is an active-site residue. Residue H150 participates in a divalent metal cation binding.

This sequence belongs to the peptidase M76 family.

Its subcellular location is the mitochondrion inner membrane. Functionally, has a dual role in the assembly of mitochondrial ATPase. Acts as a protease that removes N-terminal residues of mitochondrial ATPase CF(0) subunit 6 at the intermembrane space side. Also involved in the correct assembly of the membrane-embedded ATPase CF(0) particle, probably mediating association of subunit 6 with the subunit 9 ring. The chain is Mitochondrial inner membrane protease ATP23 (ATP23) from Eremothecium gossypii (strain ATCC 10895 / CBS 109.51 / FGSC 9923 / NRRL Y-1056) (Yeast).